We begin with the raw amino-acid sequence, 220 residues long: UPF0758 protein Asuc_0013 (220 aa).

The 123-residue stretch at 98-220 folds into the MPN domain; the sequence is EFTNPLTVRL…YFSFAEQDWL (123 aa). The Zn(2+) site is built by H169, H171, and D182. Residues 169–182 carry the JAMM motif motif; the sequence is HNHPSGSAEPSASD.

The protein belongs to the UPF0758 family.

The chain is UPF0758 protein Asuc_0013 from Actinobacillus succinogenes (strain ATCC 55618 / DSM 22257 / CCUG 43843 / 130Z).